The following is a 166-amino-acid chain: Arginine repressor (166 aa).

It belongs to the ArgR family.

It is found in the cytoplasm. Its pathway is amino-acid biosynthesis; L-arginine biosynthesis [regulation]. Functionally, regulates arginine biosynthesis genes. This is Arginine repressor from Mycobacterium ulcerans (strain Agy99).